Consider the following 318-residue polypeptide: 2-keto-3-deoxygluconate permease (318 aa).

Transmembrane regions (helical) follow at residues 10 to 30, 42 to 62, 82 to 102, 109 to 129, 139 to 159, 163 to 183, 194 to 214, 224 to 244, 257 to 277, and 289 to 309; these read LPGG…TLWP, GLIS…GATI, IAMA…GGVP, LSVL…YAAL, AGAV…LILG, LASF…LGFA, FFAQ…GNTL, ASGV…LLLA, VAAS…AGMA, and ALVA…TALY.

The protein belongs to the KdgT transporter family.

Its subcellular location is the cell inner membrane. The catalysed reaction is 2-dehydro-3-deoxy-D-gluconate(in) + H(+)(in) = 2-dehydro-3-deoxy-D-gluconate(out) + H(+)(out). In terms of biological role, catalyzes the proton-dependent uptake of 2-keto-3-deoxygluconate (KDG) into the cell. This chain is 2-keto-3-deoxygluconate permease, found in Xanthomonas euvesicatoria pv. vesicatoria (strain 85-10) (Xanthomonas campestris pv. vesicatoria).